We begin with the raw amino-acid sequence, 764 residues long: Probable 5-methyltetrahydropteroyltriglutamate--homocysteine methyltransferase (764 aa).

Residues Lys19 and Asn126 each coordinate 5-methyltetrahydropteroyltri-L-glutamate. Residue Ser182 is modified to Phosphoserine. Thr441 is modified (phosphothreonine). Residues 442–444 (IGS) and Glu495 contribute to the L-homocysteine site. L-methionine contacts are provided by residues 442 to 444 (IGS) and Glu495. 5-methyltetrahydropteroyltri-L-glutamate-binding positions include Asp500, Tyr523, 526-527 (RC), and Trp572. Position 610 (Asp610) interacts with L-homocysteine. Residue Asp610 coordinates L-methionine. Zn(2+)-binding residues include His652, Cys654, and Glu676. The active-site Proton donor is His703. Cys735 contacts Zn(2+).

The protein belongs to the vitamin-B12 independent methionine synthase family. It depends on Zn(2+) as a cofactor.

Its subcellular location is the nucleus. The protein resides in the cytoplasm. It catalyses the reaction 5-methyltetrahydropteroyltri-L-glutamate + L-homocysteine = tetrahydropteroyltri-L-glutamate + L-methionine. It functions in the pathway amino-acid biosynthesis; L-methionine biosynthesis via de novo pathway; L-methionine from L-homocysteine (MetE route): step 1/1. Catalyzes the transfer of a methyl group from 5-methyltetrahydrofolate to homocysteine resulting in methionine formation. This is Probable 5-methyltetrahydropteroyltriglutamate--homocysteine methyltransferase (met26) from Schizosaccharomyces pombe (strain 972 / ATCC 24843) (Fission yeast).